The following is a 405-amino-acid chain: Glucose-1-phosphate adenylyltransferase 1 (405 aa).

Residues Y96, G161, 176 to 177 (EK), and S194 each bind alpha-D-glucose 1-phosphate.

Belongs to the bacterial/plant glucose-1-phosphate adenylyltransferase family. As to quaternary structure, homotetramer.

The enzyme catalyses alpha-D-glucose 1-phosphate + ATP + H(+) = ADP-alpha-D-glucose + diphosphate. The protein operates within glycan biosynthesis; glycogen biosynthesis. In terms of biological role, involved in the biosynthesis of ADP-glucose, a building block required for the elongation reactions to produce glycogen. Catalyzes the reaction between ATP and alpha-D-glucose 1-phosphate (G1P) to produce pyrophosphate and ADP-Glc. The polypeptide is Glucose-1-phosphate adenylyltransferase 1 (Vibrio cholerae serotype O1 (strain ATCC 39315 / El Tor Inaba N16961)).